The primary structure comprises 101 residues: MAAKLKKGDKVVVLAGKDKGKEGEITSVSPKTGKAVVDGLNIAIRHTRQSQNSQGGRIPQAMPIDLSNLALVDSNGKPTRVGFRMEDGKKVRFAKTTGEVV.

Belongs to the universal ribosomal protein uL24 family. In terms of assembly, part of the 50S ribosomal subunit.

In terms of biological role, one of two assembly initiator proteins, it binds directly to the 5'-end of the 23S rRNA, where it nucleates assembly of the 50S subunit. Functionally, one of the proteins that surrounds the polypeptide exit tunnel on the outside of the subunit. This Dinoroseobacter shibae (strain DSM 16493 / NCIMB 14021 / DFL 12) protein is Large ribosomal subunit protein uL24.